The primary structure comprises 90 residues: Probable Fe(2+)-trafficking protein (90 aa).

The protein belongs to the Fe(2+)-trafficking protein family. Monomer.

Could be a mediator in iron transactions between iron acquisition and iron-requiring processes, such as synthesis and/or repair of Fe-S clusters in biosynthetic enzymes. In Enterobacter sp. (strain 638), this protein is Probable Fe(2+)-trafficking protein.